The chain runs to 116 residues: UPF0482 protein PC1_2049 (116 aa).

The signal sequence occupies residues 1 to 31 (MNHYSFSSLIRAFIPLSLVIVSAAWQPAALA).

The protein belongs to the UPF0482 family.

The chain is UPF0482 protein PC1_2049 from Pectobacterium carotovorum subsp. carotovorum (strain PC1).